Reading from the N-terminus, the 708-residue chain is Potassium-transporting ATPase ATP-binding subunit 2 (708 aa).

A disordered region spans residues 1–23 (MRSPSRLPHETRDSRQRTPKTDM). Basic and acidic residues predominate over residues 7–23 (LPHETRDSRQRTPKTDM). The next 4 membrane-spanning stretches (helical) occupy residues 49-69 (MFIVWVGTIVTFLVTLNPNLF), 84-104 (GLITLILFFTVLFANFAEAVA), 235-255 (IALTVLLAVLTQVFLIVVATM), and 283-303 (SIAILISLLVALIPTTIGGLL). Asp339 serves as the catalytic 4-aspartylphosphate intermediate. Residues Asp376, Glu380, 407-414 (FSAKTRMS), and Lys426 contribute to the ATP site. The Mg(2+) site is built by Asp549 and Asp553. 3 helical membrane passes run 619-639 (FAILPTIFGAAGIGALNIMGL), 645-665 (AIISALIYNALIIPALIPLAL), and 683-703 (IFIYGLGGIIAPFIAIKLIDV).

It belongs to the cation transport ATPase (P-type) (TC 3.A.3) family. Type IA subfamily. In terms of assembly, the system is composed of three essential subunits: KdpA, KdpB and KdpC.

Its subcellular location is the cell inner membrane. The catalysed reaction is K(+)(out) + ATP + H2O = K(+)(in) + ADP + phosphate + H(+). Functionally, part of the high-affinity ATP-driven potassium transport (or Kdp) system, which catalyzes the hydrolysis of ATP coupled with the electrogenic transport of potassium into the cytoplasm. This subunit is responsible for energy coupling to the transport system and for the release of the potassium ions to the cytoplasm. The polypeptide is Potassium-transporting ATPase ATP-binding subunit 2 (Nostoc sp. (strain PCC 7120 / SAG 25.82 / UTEX 2576)).